A 716-amino-acid polypeptide reads, in one-letter code: Fatty acid oxidation complex subunit alpha (716 aa).

An enoyl-CoA hydratase/isomerase region spans residues 1–189; it reads MIYQSPTIQV…KVGAVDAVVA (189 aa). A substrate-binding site is contributed by Asp-296. Positions 311-716 are 3-hydroxyacyl-CoA dehydrogenase; the sequence is KDVKSAAVLG…AANNGSYYQA (406 aa). Residues Met-324, Asp-343, 400-402, Lys-407, and Ser-429 contribute to the NAD(+) site; that span reads VVE. His-450 functions as the For 3-hydroxyacyl-CoA dehydrogenase activity in the catalytic mechanism. Asn-453 provides a ligand contact to NAD(+). Substrate contacts are provided by Asn-500 and Tyr-660.

In the N-terminal section; belongs to the enoyl-CoA hydratase/isomerase family. The protein in the C-terminal section; belongs to the 3-hydroxyacyl-CoA dehydrogenase family. In terms of assembly, heterotetramer of two alpha chains (FadB) and two beta chains (FadA).

It carries out the reaction a (3S)-3-hydroxyacyl-CoA + NAD(+) = a 3-oxoacyl-CoA + NADH + H(+). The enzyme catalyses a (3S)-3-hydroxyacyl-CoA = a (2E)-enoyl-CoA + H2O. It catalyses the reaction a 4-saturated-(3S)-3-hydroxyacyl-CoA = a (3E)-enoyl-CoA + H2O. The catalysed reaction is (3S)-3-hydroxybutanoyl-CoA = (3R)-3-hydroxybutanoyl-CoA. It carries out the reaction a (3Z)-enoyl-CoA = a 4-saturated (2E)-enoyl-CoA. The enzyme catalyses a (3E)-enoyl-CoA = a 4-saturated (2E)-enoyl-CoA. It participates in lipid metabolism; fatty acid beta-oxidation. Functionally, involved in the aerobic and anaerobic degradation of long-chain fatty acids via beta-oxidation cycle. Catalyzes the formation of 3-oxoacyl-CoA from enoyl-CoA via L-3-hydroxyacyl-CoA. It can also use D-3-hydroxyacyl-CoA and cis-3-enoyl-CoA as substrate. The protein is Fatty acid oxidation complex subunit alpha of Shewanella sp. (strain ANA-3).